Reading from the N-terminus, the 320-residue chain is TPR repeat-containing protein MJ0263 (320 aa).

TPR repeat units follow at residues 12-45 (ILKD…DKDN), 46-79 (PLVL…EGTS), 80-113 (LLSL…SKPC), 114-147 (YLSP…YPNL), 148-181 (TSIL…KKDD), 182-215 (AHAW…NENL), 216-249 (VHVY…FPND), 250-283 (VEAK…KNVK), and 289-320 (KSSI…DNNI).

In Methanocaldococcus jannaschii (strain ATCC 43067 / DSM 2661 / JAL-1 / JCM 10045 / NBRC 100440) (Methanococcus jannaschii), this protein is TPR repeat-containing protein MJ0263.